Consider the following 234-residue polypeptide: Cell fusion protein dni1 (234 aa).

The signal sequence occupies residues 1–32; that stretch reads MLFLHSVVQGTGTLCTLAAWILLALVMTGCQS. The Extracellular segment spans residues 33–96; it reads STTSKFQLFS…RSKFLINEVH (64 aa). Residues 97–117 traverse the membrane as a helical segment; the sequence is PWMIVFSFCVCGVSFLMGVVS. Topologically, residues 118-132 are cytoplasmic; it reads SLPLIGRLEFLRNIR. The helical transmembrane segment at 133–153 threads the bilayer; it reads ISLSFFSFFSILVTALFAHVA. Residues 154 to 178 are Extracellular-facing; it reads VSSFVMAVGNGTQNRVTASLGKKAM. Residues 179–199 traverse the membrane as a helical segment; it reads IFLWCSMGLVTLTGITDSIIL. Topologically, residues 200 to 234 are cytoplasmic; that stretch reads LVTSRTKKIRKTILEKSKVLTPSSSFSSKSSTTKY.

This sequence belongs to the SUR7 family.

It is found in the cell membrane. It localises to the cell tip. Functionally, cell membrane protein which plays a relevant role in coordinating membrane organization and cell wall remodeling during mating. The sequence is that of Cell fusion protein dni1 (dni1) from Schizosaccharomyces pombe (strain 972 / ATCC 24843) (Fission yeast).